We begin with the raw amino-acid sequence, 442 residues long: UBX domain-containing protein 6 (442 aa).

The mediates interaction with LMAN1 stretch occupies residues 1–10 (MKKFFQEIKA). A disordered region spans residues 13–111 (KFKSAGPGQK…TNSVPEPKEE (99 aa)). Position 36 is a phosphoserine (Ser36). Residues 51–63 (EAQMAAAAALARL) form a VCP/p97-interacting motif (VIM) region. The segment covering 52–61 (AQMAAAAALA) has biased composition (low complexity). A compositionally biased stretch (polar residues) spans 90–105 (EATSSNNPGAPGTNSV). The PUB domain maps to 175–244 (VDTIAKYLDN…GQEEFYVLGE (70 aa)). Positions 332 to 408 (RKYTYALVRV…GLVPSALLTF (77 aa)) constitute a UBX domain.

Interacts with VCP through the PUB domain (via C-terminus) and VIM motif (via N-terminus); the interaction is direct. Forms a ternary complex with CAV1 and VCP. Interacts with SYVN1. Interacts with HERPUD1. Interacts with VCPKMT. May interact with DERL1. Interacts with PLAA, VCP and YOD1; may form a complex involved in macroautophagy. Interacts with LMAN1. In terms of tissue distribution, widely expressed (at protein level). Highest expression in brain (at protein level).

The protein resides in the cytoplasm. It is found in the cytosol. The protein localises to the membrane. It localises to the nucleus. Its subcellular location is the cytoskeleton. The protein resides in the microtubule organizing center. It is found in the centrosome. The protein localises to the early endosome membrane. It localises to the late endosome membrane. Its subcellular location is the lysosome membrane. Functionally, may negatively regulate the ATPase activity of VCP, an ATP-driven segregase that associates with different cofactors to control a wide variety of cellular processes. As a cofactor of VCP, it may play a role in the transport of CAV1 to lysosomes for degradation. It may also play a role in endoplasmic reticulum-associated degradation (ERAD) of misfolded proteins. Together with VCP and other cofactors, it may play a role in macroautophagy, regulating for instance the clearance of damaged lysosomes. In Mus musculus (Mouse), this protein is UBX domain-containing protein 6.